We begin with the raw amino-acid sequence, 115 residues long: NADH-ubiquinone oxidoreductase chain 3 (115 aa).

The next 3 helical transmembrane spans lie at 3-23, 55-75, and 84-104; these read FVLALTVNTLLALLLMTITFW, FFLVAITFLLFDLEIALLLPL, and LPLMTTSSLMLIIILALGLTY.

This sequence belongs to the complex I subunit 3 family. As to quaternary structure, core subunit of respiratory chain NADH dehydrogenase (Complex I) which is composed of 45 different subunits. Interacts with TMEM186. Interacts with TMEM242.

The protein localises to the mitochondrion inner membrane. The enzyme catalyses a ubiquinone + NADH + 5 H(+)(in) = a ubiquinol + NAD(+) + 4 H(+)(out). Core subunit of the mitochondrial membrane respiratory chain NADH dehydrogenase (Complex I) which catalyzes electron transfer from NADH through the respiratory chain, using ubiquinone as an electron acceptor. Essential for the catalytic activity of complex I. The sequence is that of NADH-ubiquinone oxidoreductase chain 3 from Pongo abelii (Sumatran orangutan).